The primary structure comprises 529 residues: BTB/POZ domain-containing protein 6 (529 aa).

The BTB domain maps to 127–197 (ADVHFIVGPA…LYSDEIDLEA (71 aa)).

As to quaternary structure, homodimer and heterodimer. Interacts with cul3 via the BTB domain.

Its subcellular location is the cytoplasm. Adapter protein for the cul3 E3 ubiquitin-protein ligase complex. Involved in late neuronal development and muscle formation. This is BTB/POZ domain-containing protein 6 (btbd6) from Xenopus tropicalis (Western clawed frog).